Reading from the N-terminus, the 247-residue chain is TLC domain-containing protein 1 (247 aa).

The first 27 residues, 1-27 (MPLLFHPAWPLLLGATLTFRALRRVLC), serve as a signal peptide directing secretion. Topologically, residues 28-46 (RLPQPAHVQTDPLRTWRWH) are extracellular. The TLC domain maps to 40 to 234 (LRTWRWHNLL…LLRSDFCPER (195 aa)). A helical transmembrane segment spans residues 47 to 67 (NLLVSFTHSIVSGIWALLCLW). Topologically, residues 68-83 (QTPEMLVEIETAWSAS) are cytoplasmic. The chain crosses the membrane as a helical span at residues 84 to 104 (GYLLVCFSAGYFIHDTVDIVV). Residues 105-123 (SKQTRASWEYLVHHVMAMG) lie on the Extracellular side of the membrane. Positions 124 to 144 (AFFSGIFWKRFVGGGVLTLLV) form an intramembrane region, helical. The Extracellular segment spans residues 145-173 (EVSNIFLTLRMMMKINNAQDLLLYKVNKY). Residues 174–194 (INLVMYFLFRLAPQAYLTKFF) traverse the membrane as a helical segment. Residues 195-201 (LQYAGQR) are Cytoplasmic-facing. A helical transmembrane segment spans residues 202–222 (TLGTFLLAILLMLDLMIIIYF). Residues 223 to 247 (SRLLRSDFCPERAPRRQQKDKFLTE) are Extracellular-facing.

It localises to the cell membrane. In terms of biological role, regulates the composition and fluidity of the plasma membrane. Inhibits the incorporation of membrane-fluidizing phospholipids containing omega-3 long-chain polyunsaturated fatty acids (LCPUFA) and thereby promotes membrane rigidity. Does not appear to have any effect on LCPUFA synthesis. The polypeptide is TLC domain-containing protein 1 (Tlcd1) (Mus musculus (Mouse)).